The sequence spans 100 residues: Putative pterin-4-alpha-carbinolamine dehydratase (100 aa).

The protein belongs to the pterin-4-alpha-carbinolamine dehydratase family.

The catalysed reaction is (4aS,6R)-4a-hydroxy-L-erythro-5,6,7,8-tetrahydrobiopterin = (6R)-L-erythro-6,7-dihydrobiopterin + H2O. The polypeptide is Putative pterin-4-alpha-carbinolamine dehydratase (Rhodopseudomonas palustris (strain TIE-1)).